The following is a 379-amino-acid chain: UDP-4-amino-4-deoxy-L-arabinose--oxoglutarate aminotransferase (379 aa).

Lysine 182 is subject to N6-(pyridoxal phosphate)lysine.

The protein belongs to the DegT/DnrJ/EryC1 family. ArnB subfamily. Homodimer. Requires pyridoxal 5'-phosphate as cofactor.

It catalyses the reaction UDP-4-amino-4-deoxy-beta-L-arabinose + 2-oxoglutarate = UDP-beta-L-threo-pentopyranos-4-ulose + L-glutamate. The protein operates within nucleotide-sugar biosynthesis; UDP-4-deoxy-4-formamido-beta-L-arabinose biosynthesis; UDP-4-deoxy-4-formamido-beta-L-arabinose from UDP-alpha-D-glucuronate: step 2/3. It participates in bacterial outer membrane biogenesis; lipopolysaccharide biosynthesis. Catalyzes the conversion of UDP-4-keto-arabinose (UDP-Ara4O) to UDP-4-amino-4-deoxy-L-arabinose (UDP-L-Ara4N). The modified arabinose is attached to lipid A and is required for resistance to polymyxin and cationic antimicrobial peptides. The polypeptide is UDP-4-amino-4-deoxy-L-arabinose--oxoglutarate aminotransferase (Escherichia coli O81 (strain ED1a)).